A 47-amino-acid chain; its full sequence is Protein RL9A (47 aa).

A helical transmembrane segment spans residues 27–47 (CMIIVIMIAISIWILTYVLFL).

It is found in the host membrane. In Human cytomegalovirus (strain Merlin) (HHV-5), this protein is Protein RL9A (RL9A).